We begin with the raw amino-acid sequence, 221 residues long: Iron-sulfur cluster assembly SufBD family protein ycf24 (221 aa).

Belongs to the iron-sulfur cluster assembly SufBD family.

It is found in the plastid. The protein resides in the chloroplast. This Galdieria sulphuraria (Red alga) protein is Iron-sulfur cluster assembly SufBD family protein ycf24 (ycf24).